Consider the following 296-residue polypeptide: GTPase Era (296 aa).

The 168-residue stretch at 7-174 (RTGFVAVVGR…LDEIAARLPE (168 aa)) folds into the Era-type G domain. Residues 15 to 22 (GRPNVGKS) are G1. 15-22 (GRPNVGKS) lines the GTP pocket. The interval 41–45 (QTTRH) is G2. Residues 62–65 (DTPG) form a G3 region. Residues 62–66 (DTPGF) and 123–126 (SKID) contribute to the GTP site. Positions 123 to 126 (SKID) are G4. The segment at 153–155 (VSA) is G5. In terms of domain architecture, KH type-2 spans 205–281 (VGDELPYGCT…HLEVYIKVRK (77 aa)).

It belongs to the TRAFAC class TrmE-Era-EngA-EngB-Septin-like GTPase superfamily. Era GTPase family. Monomer.

Its subcellular location is the cytoplasm. It is found in the cell inner membrane. Functionally, an essential GTPase that binds both GDP and GTP, with rapid nucleotide exchange. Plays a role in 16S rRNA processing and 30S ribosomal subunit biogenesis and possibly also in cell cycle regulation and energy metabolism. The protein is GTPase Era of Bordetella petrii (strain ATCC BAA-461 / DSM 12804 / CCUG 43448).